Here is a 267-residue protein sequence, read N- to C-terminus: 3-methyl-2-oxobutanoate hydroxymethyltransferase (267 aa).

2 residues coordinate Mg(2+): D45 and D84. Residues 45–46 (DS), D84, and K113 contribute to the 3-methyl-2-oxobutanoate site. E115 is a Mg(2+) binding site. The active-site Proton acceptor is E182.

It belongs to the PanB family. Homodecamer; pentamer of dimers. Mg(2+) serves as cofactor.

The protein localises to the cytoplasm. The catalysed reaction is 3-methyl-2-oxobutanoate + (6R)-5,10-methylene-5,6,7,8-tetrahydrofolate + H2O = 2-dehydropantoate + (6S)-5,6,7,8-tetrahydrofolate. It functions in the pathway cofactor biosynthesis; coenzyme A biosynthesis. Catalyzes the reversible reaction in which hydroxymethyl group from 5,10-methylenetetrahydrofolate is transferred onto alpha-ketoisovalerate to form ketopantoate. This chain is 3-methyl-2-oxobutanoate hydroxymethyltransferase, found in Saccharolobus islandicus (strain M.16.27) (Sulfolobus islandicus).